We begin with the raw amino-acid sequence, 1339 residues long: DNA polymerase alpha catalytic subunit (1339 aa).

Disordered regions lie at residues Met-1–Asp-90 and Asn-177–Asn-203. The segment covering Asp-27–Val-36 has biased composition (basic and acidic residues). Over residues Pro-79 to Ser-89 the composition is skewed to polar residues. Residues Cys-1179, Cys-1182, Cys-1213, Cys-1216, Cys-1233, Cys-1243, Cys-1271, and Cys-1286 each coordinate Zn(2+). A CysA-type zinc finger spans residues Cys-1179–Cys-1216. The CysB motif motif lies at Cys-1243–Cys-1271.

The protein belongs to the DNA polymerase type-B family.

Its subcellular location is the nucleus. It carries out the reaction DNA(n) + a 2'-deoxyribonucleoside 5'-triphosphate = DNA(n+1) + diphosphate. Its function is as follows. Polymerase alpha in a complex with DNA primase is a replicative polymerase. The protein is DNA polymerase alpha catalytic subunit of Leishmania donovani.